Consider the following 351-residue polypeptide: DNA polymerase IV (351 aa).

Positions 4-185 (IIHVDMDCFF…LPLEKIPGVG (182 aa)) constitute a UmuC domain. Positions 8 and 103 each coordinate Mg(2+). Residue glutamate 104 is part of the active site.

It belongs to the DNA polymerase type-Y family. In terms of assembly, monomer. Mg(2+) is required as a cofactor.

The protein localises to the cytoplasm. It catalyses the reaction DNA(n) + a 2'-deoxyribonucleoside 5'-triphosphate = DNA(n+1) + diphosphate. Poorly processive, error-prone DNA polymerase involved in untargeted mutagenesis. Copies undamaged DNA at stalled replication forks, which arise in vivo from mismatched or misaligned primer ends. These misaligned primers can be extended by PolIV. Exhibits no 3'-5' exonuclease (proofreading) activity. May be involved in translesional synthesis, in conjunction with the beta clamp from PolIII. This Shigella flexneri protein is DNA polymerase IV.